The following is a 244-amino-acid chain: tRNA pseudouridine synthase A (244 aa).

The active-site Nucleophile is D52. Substrate is bound at residue Y110.

Belongs to the tRNA pseudouridine synthase TruA family. As to quaternary structure, homodimer.

The catalysed reaction is uridine(38/39/40) in tRNA = pseudouridine(38/39/40) in tRNA. In terms of biological role, formation of pseudouridine at positions 38, 39 and 40 in the anticodon stem and loop of transfer RNAs. This chain is tRNA pseudouridine synthase A, found in Pelobacter propionicus (strain DSM 2379 / NBRC 103807 / OttBd1).